A 408-amino-acid polypeptide reads, in one-letter code: DNA replication and repair protein RecF (408 aa).

30–37 serves as a coordination point for ATP; it reads GSNGQGKT. 2 disordered regions span residues 220-252 and 389-408; these read DHGPSARPELSILADDPGEDDVADETGARDGGR and SPTPASASEPASPGEDGGAA. Over residues 389 to 402 the composition is skewed to low complexity; it reads SPTPASASEPASPG.

This sequence belongs to the RecF family.

The protein localises to the cytoplasm. The RecF protein is involved in DNA metabolism; it is required for DNA replication and normal SOS inducibility. RecF binds preferentially to single-stranded, linear DNA. It also seems to bind ATP. This Clavibacter sepedonicus (Clavibacter michiganensis subsp. sepedonicus) protein is DNA replication and repair protein RecF.